Here is a 391-residue protein sequence, read N- to C-terminus: ATP phosphoribosyltransferase regulatory subunit (391 aa).

It belongs to the class-II aminoacyl-tRNA synthetase family. HisZ subfamily. As to quaternary structure, heteromultimer composed of HisG and HisZ subunits.

The protein localises to the cytoplasm. The protein operates within amino-acid biosynthesis; L-histidine biosynthesis; L-histidine from 5-phospho-alpha-D-ribose 1-diphosphate: step 1/9. In terms of biological role, required for the first step of histidine biosynthesis. May allow the feedback regulation of ATP phosphoribosyltransferase activity by histidine. This chain is ATP phosphoribosyltransferase regulatory subunit, found in Bacillus pumilus (strain SAFR-032).